The primary structure comprises 889 residues: Translation initiation factor IF-2 (889 aa).

Residues 158–296 form a disordered region; that stretch reads LKEKQEKRRQ…KYKSDELQSQ (139 aa). Over residues 209–228 the composition is skewed to low complexity; that stretch reads AAATPATSTAPATTSTTAAT. A compositionally biased stretch (basic and acidic residues) spans 238 to 270; that stretch reads VKPEEKGEKKKKPTKQDAWKDEPVKRREPKARG. Positions 391–560 constitute a tr-type G domain; the sequence is PRAPVVTVMG…LLQAEVLELK (170 aa). A G1 region spans residues 400 to 407; it reads GHVDHGKT. A GTP-binding site is contributed by 400–407; the sequence is GHVDHGKT. A G2 region spans residues 425–429; that stretch reads GITQH. Positions 446–449 are G3; the sequence is DTPG. GTP is bound by residues 446–450 and 500–503; these read DTPGH and NKMD. Residues 500–503 form a G4 region; sequence NKMD. The segment at 536–538 is G5; that stretch reads SAK.

It belongs to the TRAFAC class translation factor GTPase superfamily. Classic translation factor GTPase family. IF-2 subfamily.

Its subcellular location is the cytoplasm. Functionally, one of the essential components for the initiation of protein synthesis. Protects formylmethionyl-tRNA from spontaneous hydrolysis and promotes its binding to the 30S ribosomal subunits. Also involved in the hydrolysis of GTP during the formation of the 70S ribosomal complex. The protein is Translation initiation factor IF-2 of Nitrosomonas europaea (strain ATCC 19718 / CIP 103999 / KCTC 2705 / NBRC 14298).